The primary structure comprises 695 residues: DNA ligase (695 aa).

30 to 34 (DADFD) contacts NAD(+). The interval 52 to 71 (TGASPTEEVAPAPPTSSPFR) is disordered. NAD(+) is bound by residues 81 to 82 (SL) and glutamate 106. Catalysis depends on lysine 108, which acts as the N6-AMP-lysine intermediate. Arginine 129, glutamate 169, lysine 285, and lysine 309 together coordinate NAD(+). Residues cysteine 403, cysteine 406, cysteine 422, and cysteine 428 each contribute to the Zn(2+) site. Residues 599 to 688 (VDSALLEGLT…APSSGDDAST (90 aa)) form the BRCT domain. The segment at 676-695 (ENGAPSSGDDASTSADSVDD) is disordered. Positions 679–695 (APSSGDDASTSADSVDD) are enriched in low complexity.

It belongs to the NAD-dependent DNA ligase family. LigA subfamily. The cofactor is Mg(2+). Mn(2+) is required as a cofactor.

The catalysed reaction is NAD(+) + (deoxyribonucleotide)n-3'-hydroxyl + 5'-phospho-(deoxyribonucleotide)m = (deoxyribonucleotide)n+m + AMP + beta-nicotinamide D-nucleotide.. Its function is as follows. DNA ligase that catalyzes the formation of phosphodiester linkages between 5'-phosphoryl and 3'-hydroxyl groups in double-stranded DNA using NAD as a coenzyme and as the energy source for the reaction. It is essential for DNA replication and repair of damaged DNA. This is DNA ligase from Corynebacterium jeikeium (strain K411).